A 198-amino-acid polypeptide reads, in one-letter code: Na(+)-translocating NADH-quinone reductase subunit E (198 aa).

The next 6 helical transmembrane spans lie at 11 to 31 (SIFI…FLAV), 35 to 55 (VSTA…AVPA), 77 to 97 (FLNF…LEMI), 110 to 130 (GIFL…SFMV), 140 to 160 (VVYG…LAGI), and 176 to 196 (LGIT…FSGI).

This sequence belongs to the NqrDE/RnfAE family. As to quaternary structure, composed of six subunits; NqrA, NqrB, NqrC, NqrD, NqrE and NqrF.

It localises to the cell inner membrane. The enzyme catalyses a ubiquinone + n Na(+)(in) + NADH + H(+) = a ubiquinol + n Na(+)(out) + NAD(+). Its function is as follows. NQR complex catalyzes the reduction of ubiquinone-1 to ubiquinol by two successive reactions, coupled with the transport of Na(+) ions from the cytoplasm to the periplasm. NqrA to NqrE are probably involved in the second step, the conversion of ubisemiquinone to ubiquinol. The protein is Na(+)-translocating NADH-quinone reductase subunit E of Glaesserella parasuis serovar 5 (strain SH0165) (Haemophilus parasuis).